The following is a 177-amino-acid chain: ATP-dependent protease subunit HslV (177 aa).

Thr4 is a catalytic residue. Na(+) is bound by residues Ser159, Cys162, and Thr165.

This sequence belongs to the peptidase T1B family. HslV subfamily. In terms of assembly, a double ring-shaped homohexamer of HslV is capped on each side by a ring-shaped HslU homohexamer. The assembly of the HslU/HslV complex is dependent on binding of ATP.

It is found in the cytoplasm. The enzyme catalyses ATP-dependent cleavage of peptide bonds with broad specificity.. Allosterically activated by HslU binding. Protease subunit of a proteasome-like degradation complex believed to be a general protein degrading machinery. The sequence is that of ATP-dependent protease subunit HslV from Mesorhizobium japonicum (strain LMG 29417 / CECT 9101 / MAFF 303099) (Mesorhizobium loti (strain MAFF 303099)).